Here is a 593-residue protein sequence, read N- to C-terminus: Aspartate--tRNA ligase (593 aa).

Residue glutamate 180 participates in L-aspartate binding. Residues 204 to 207 (QLFK) are aspartate. Arginine 226 is a binding site for L-aspartate. Residues 226–228 (RDE) and glutamine 235 each bind ATP. Histidine 454 lines the L-aspartate pocket. Glutamate 488 contacts ATP. Arginine 495 contributes to the L-aspartate binding site. 540–543 (GFDR) contacts ATP.

Belongs to the class-II aminoacyl-tRNA synthetase family. Type 1 subfamily. In terms of assembly, homodimer.

It localises to the cytoplasm. It catalyses the reaction tRNA(Asp) + L-aspartate + ATP = L-aspartyl-tRNA(Asp) + AMP + diphosphate. Its function is as follows. Catalyzes the attachment of L-aspartate to tRNA(Asp) in a two-step reaction: L-aspartate is first activated by ATP to form Asp-AMP and then transferred to the acceptor end of tRNA(Asp). This Clostridium novyi (strain NT) protein is Aspartate--tRNA ligase.